A 433-amino-acid polypeptide reads, in one-letter code: tRNA-2-methylthio-N(6)-dimethylallyladenosine synthase (433 aa).

An MTTase N-terminal domain is found at 4 to 119 (KKLFIQTLGC…ITQAIKTPKF (116 aa)). [4Fe-4S] cluster is bound by residues cysteine 13, cysteine 50, cysteine 82, cysteine 151, cysteine 155, and cysteine 158. One can recognise a Radical SAM core domain in the interval 137 to 370 (RNSIYKSYIN…QNRHSEILDE (234 aa)). One can recognise a TRAM domain in the interval 373 to 433 (KKQENKTFKV…KRMVLYGEIV (61 aa)).

Belongs to the methylthiotransferase family. MiaB subfamily. In terms of assembly, monomer. The cofactor is [4Fe-4S] cluster.

Its subcellular location is the cytoplasm. It catalyses the reaction N(6)-dimethylallyladenosine(37) in tRNA + (sulfur carrier)-SH + AH2 + 2 S-adenosyl-L-methionine = 2-methylsulfanyl-N(6)-dimethylallyladenosine(37) in tRNA + (sulfur carrier)-H + 5'-deoxyadenosine + L-methionine + A + S-adenosyl-L-homocysteine + 2 H(+). Its function is as follows. Catalyzes the methylthiolation of N6-(dimethylallyl)adenosine (i(6)A), leading to the formation of 2-methylthio-N6-(dimethylallyl)adenosine (ms(2)i(6)A) at position 37 in tRNAs that read codons beginning with uridine. This chain is tRNA-2-methylthio-N(6)-dimethylallyladenosine synthase, found in Campylobacter jejuni (strain RM1221).